Reading from the N-terminus, the 281-residue chain is MKNIGININTDKDISRNILDKIFQYIHEECSEAKIKVFYDSKGLDNEESRALDAVMVLGGDGTILGTARALAKYDVPIFGINRGHLGFLAEIELEDCKKAIKNLFKGQYKIEDRIMLKCDLKGIDKKDDFLALNDIVLTKGNLSRIVKYSIYVDDVWYTTFVADGVIVATPTGSTAYSLSAGGPIVYPDLDVLEIAPICPHSLGIRPILLNGNSKINIRVLKKYEDPVLTIDGQRYKKVTVNEVTISKSEYKCRLIKFKDKDYFKILRTKISYRSRECEGE.

Asp61 acts as the Proton acceptor in catalysis. NAD(+) contacts are provided by residues 61 to 62 (DG), 134 to 135 (ND), Arg145, Asp164, 175 to 180 (TAYSLS), and Gln234.

The protein belongs to the NAD kinase family. The cofactor is a divalent metal cation.

The protein resides in the cytoplasm. It carries out the reaction NAD(+) + ATP = ADP + NADP(+) + H(+). In terms of biological role, involved in the regulation of the intracellular balance of NAD and NADP, and is a key enzyme in the biosynthesis of NADP. Catalyzes specifically the phosphorylation on 2'-hydroxyl of the adenosine moiety of NAD to yield NADP. This Clostridium botulinum (strain ATCC 19397 / Type A) protein is NAD kinase.